The chain runs to 331 residues: Cysteine and histidine-rich domain-containing protein 1 (331 aa).

Position 2 is an N-acetylalanine (alanine 2). Residues 2–77 are interaction with PPP5C; it reads ALLCYNRGCG…KPPEPVKPEV (76 aa). 6 residues coordinate Zn(2+): cysteine 5, cysteine 10, cysteine 24, histidine 27, cysteine 42, and cysteine 43. 2 consecutive CHORD domains span residues 5 to 64 and 157 to 216; these read CYNR…KGRH and CKNG…RGKH. Position 47 is a phosphothreonine (threonine 47). Serine 51 carries the post-translational modification Phosphoserine. Zn(2+)-binding residues include cysteine 59, histidine 64, cysteine 157, cysteine 162, cysteine 176, histidine 179, cysteine 194, cysteine 195, cysteine 211, and histidine 216. The tract at residues 62 to 82 is disordered; it reads GRHNSEKPPEPVKPEVKTTEK. Residues 64–82 show a composition bias toward basic and acidic residues; that stretch reads HNSEKPPEPVKPEVKTTEK. The interaction with HSP90AA1 and HSP90AB1 stretch occupies residues 65 to 316; sequence NSEKPPEPVK…AEPMQWASLE (252 aa). One can recognise a CS domain in the interval 227–316; sequence VVPCRHDWHQ…AEPMQWASLE (90 aa).

Interacts with HSP90AA1, HSP90AB1, PPP5C, ROCK1 and ROCK2.

Regulates centrosome duplication, probably by inhibiting the kinase activity of ROCK2. Proposed to act as co-chaperone for HSP90. May play a role in the regulation of NOD1 via a HSP90 chaperone complex. In vitro, has intrinsic chaperone activity. This function may be achieved by inhibiting association of ROCK2 with NPM1. Plays a role in ensuring the localization of the tyrosine kinase receptor EGFR to the plasma membrane, and thus ensures the subsequent regulation of EGFR activity and EGF-induced actin cytoskeleton remodeling. Involved in stress response. Prevents tumorigenesis. The protein is Cysteine and histidine-rich domain-containing protein 1 (Chordc1) of Rattus norvegicus (Rat).